The sequence spans 302 residues: Digeranylgeranylglyceryl phosphate synthase (302 aa).

The next 8 membrane-spanning stretches (helical) occupy residues 21–41 (LVVA…IYGG), 43–63 (IVSS…AGGY), 103–123 (IGLI…FAVL), 144–164 (IVIA…ASCM), 167–187 (GKVV…LLVL), 218–238 (AYMA…FPYI), 244–264 (MAYL…LAIL), and 282–302 (ARSA…AGLM).

The protein belongs to the UbiA prenyltransferase family. DGGGP synthase subfamily. Mg(2+) is required as a cofactor.

Its subcellular location is the cell membrane. It carries out the reaction sn-3-O-(geranylgeranyl)glycerol 1-phosphate + (2E,6E,10E)-geranylgeranyl diphosphate = 2,3-bis-O-(geranylgeranyl)-sn-glycerol 1-phosphate + diphosphate. The protein operates within membrane lipid metabolism; glycerophospholipid metabolism. Functionally, prenyltransferase that catalyzes the transfer of the geranylgeranyl moiety of geranylgeranyl diphosphate (GGPP) to the C2 hydroxyl of (S)-3-O-geranylgeranylglyceryl phosphate (GGGP). This reaction is the second ether-bond-formation step in the biosynthesis of archaeal membrane lipids. The protein is Digeranylgeranylglyceryl phosphate synthase of Hyperthermus butylicus (strain DSM 5456 / JCM 9403 / PLM1-5).